The primary structure comprises 307 residues: Ribulose bisphosphate carboxylase/oxygenase activase, chloroplastic (307 aa).

The transit peptide at 1 to 46 (MSIPDDKEAGTIDEFLQKEGVLDILQKLDHDLVGLKPVKDRVREIA) directs the protein to the chloroplast. 73–80 (GSPGTGKT) is an ATP binding site.

It belongs to the CbxX/CfxQ family. Forms homooligomers. Forms heterohexameric rings with the plastid-encoded Rca subunit consisting of 3 of each nuclear- and plastidial-encoded subunits that alternate in the ring.

The protein localises to the plastid. The protein resides in the chloroplast. Functionally, required for the expression of ribulose 1,5-bisphosphate carboxylase/oxygenase (RuBisCo). ATPase involved in the activation of red-type RuBisCo, which tends to form inactive complexes with its substrate ribulose 1,5-bisphosphate (RuBP). Catalyzes the release of RuBP from inhibited RuBisCo in an ATP-dependent manner. Activation of RuBisCO involves the ATP-dependent carboxylation of the epsilon-amino group of lysine leading to a carbamate structure. The nuclear-encoded subunit plays a more critical role in activase function than the plastidial-encoded subunit. This is Ribulose bisphosphate carboxylase/oxygenase activase, chloroplastic from Cyanidioschyzon merolae (strain NIES-3377 / 10D) (Unicellular red alga).